The following is a 124-amino-acid chain: Histone H2A (124 aa).

The segment covering methionine 1–serine 18 has biased composition (basic residues). The disordered stretch occupies residues methionine 1 to leucine 23. An N-acetylserine modification is found at serine 2. Serine 2 carries the post-translational modification Phosphoserine. Residue glutamine 104 is modified to N5-methylglutamine.

Belongs to the histone H2A family. As to quaternary structure, the nucleosome is a histone octamer containing two molecules each of H2A, H2B, H3 and H4 assembled in one H3-H4 heterotetramer and two H2A-H2B heterodimers. The octamer wraps approximately 147 bp of DNA. Phosphorylation of Ser-2 directly represses transcription.

It is found in the nucleus. The protein resides in the chromosome. Core component of nucleosome. Nucleosomes wrap and compact DNA into chromatin, limiting DNA accessibility to the cellular machineries which require DNA as a template. Histones thereby play a central role in transcription regulation, DNA repair, DNA replication and chromosomal stability. DNA accessibility is regulated via a complex set of post-translational modifications of histones, also called histone code, and nucleosome remodeling. The polypeptide is Histone H2A (Platynereis dumerilii (Dumeril's clam worm)).